A 614-amino-acid polypeptide reads, in one-letter code: BPI fold-containing family B member 4 (614 aa).

A signal peptide spans 1-18 (MWMAWCVAALSVVAVCGT). The N-linked (GlcNAc...) asparagine glycan is linked to Asn273. The cysteines at positions 295 and 332 are disulfide-linked.

The protein belongs to the BPI/LBP/Plunc superfamily. BPI/LBP family. In terms of tissue distribution, expressed in nasal tissue.

Its subcellular location is the secreted. It is found in the cytoplasm. Functionally, may have the capacity to recognize and bind specific classes of odorants. May act as a carrier molecule, transporting odorants across the mucus layer to access receptor sites. May serve as a primary defense mechanism by recognizing and removing potentially harmful odorants or pathogenic microorganisms from the mucosa or clearing excess odorant from mucus to enable new odorant stimuli to be received. The chain is BPI fold-containing family B member 4 (BPIFB4) from Homo sapiens (Human).